We begin with the raw amino-acid sequence, 213 residues long: Uridine kinase (213 aa).

15-22 (GASASGKS) contributes to the ATP binding site.

It belongs to the uridine kinase family.

The protein resides in the cytoplasm. The catalysed reaction is uridine + ATP = UMP + ADP + H(+). It carries out the reaction cytidine + ATP = CMP + ADP + H(+). It participates in pyrimidine metabolism; CTP biosynthesis via salvage pathway; CTP from cytidine: step 1/3. It functions in the pathway pyrimidine metabolism; UMP biosynthesis via salvage pathway; UMP from uridine: step 1/1. The protein is Uridine kinase of Salmonella newport (strain SL254).